Consider the following 210-residue polypeptide: Vacuolar protein sorting-associated protein 28 homolog 2 (210 aa).

The 99-residue stretch at 1–99 (MMEVKLWNDK…VTSGLPATVE (99 aa)) folds into the VPS28 N-terminal domain. The VPS28 C-terminal domain maps to 109–205 (SNSASIVAEC…SSYNSFMAAL (97 aa)).

The protein belongs to the VPS28 family. In terms of assembly, component of the endosomal sorting required for transport complex I (ESCRT-I), composed of ELC, VPS28 and VPS37. Interacts with ELC.

It localises to the endosome. Component of the ESCRT-I complex (endosomal sorting complex required for transport I), a regulator of vesicular trafficking process. Required for the sorting of endocytic ubiquitinated cargos into multivesicular bodies (MVBs). Mediates the association to the ESCRT-0 complex. The protein is Vacuolar protein sorting-associated protein 28 homolog 2 (VPS28-2) of Arabidopsis thaliana (Mouse-ear cress).